The primary structure comprises 177 residues: Large ribosomal subunit protein uL6 (177 aa).

Belongs to the universal ribosomal protein uL6 family. Part of the 50S ribosomal subunit.

In terms of biological role, this protein binds to the 23S rRNA, and is important in its secondary structure. It is located near the subunit interface in the base of the L7/L12 stalk, and near the tRNA binding site of the peptidyltransferase center. In Dinoroseobacter shibae (strain DSM 16493 / NCIMB 14021 / DFL 12), this protein is Large ribosomal subunit protein uL6.